The sequence spans 469 residues: Phenylalanine--tRNA ligase, mitochondrial (469 aa).

The transit peptide at 1–17 directs the protein to the mitochondrion; sequence MFLNRMMKTRTGLYRLY. Residues 126–129, R155, 162–164, 169–171, E302, and F329 each bind substrate; these read SAHE, THY, and QME. The region spanning 372 to 469 is the FDX-ACB domain; the sequence is SKHPGSFRDV…LVKEYSVELR (98 aa).

This sequence belongs to the class-II aminoacyl-tRNA synthetase family. Monomer.

The protein localises to the mitochondrion matrix. The catalysed reaction is tRNA(Phe) + L-phenylalanine + ATP = L-phenylalanyl-tRNA(Phe) + AMP + diphosphate + H(+). Its function is as follows. Is responsible for the charging of tRNA(Phe) with phenylalanine in mitochondrial translation. The protein is Phenylalanine--tRNA ligase, mitochondrial (MSF1) of Saccharomyces cerevisiae (strain ATCC 204508 / S288c) (Baker's yeast).